The sequence spans 345 residues: S-adenosylmethionine:tRNA ribosyltransferase-isomerase (345 aa).

Belongs to the QueA family. In terms of assembly, monomer.

Its subcellular location is the cytoplasm. The enzyme catalyses 7-aminomethyl-7-carbaguanosine(34) in tRNA + S-adenosyl-L-methionine = epoxyqueuosine(34) in tRNA + adenine + L-methionine + 2 H(+). Its pathway is tRNA modification; tRNA-queuosine biosynthesis. Transfers and isomerizes the ribose moiety from AdoMet to the 7-aminomethyl group of 7-deazaguanine (preQ1-tRNA) to give epoxyqueuosine (oQ-tRNA). The chain is S-adenosylmethionine:tRNA ribosyltransferase-isomerase from Helicobacter acinonychis (strain Sheeba).